Reading from the N-terminus, the 410-residue chain is ATP phosphoribosyltransferase regulatory subunit (410 aa).

The protein belongs to the class-II aminoacyl-tRNA synthetase family. HisZ subfamily. In terms of assembly, heteromultimer composed of HisG and HisZ subunits.

It localises to the cytoplasm. Its pathway is amino-acid biosynthesis; L-histidine biosynthesis; L-histidine from 5-phospho-alpha-D-ribose 1-diphosphate: step 1/9. Required for the first step of histidine biosynthesis. May allow the feedback regulation of ATP phosphoribosyltransferase activity by histidine. This is ATP phosphoribosyltransferase regulatory subunit from Synechococcus sp. (strain JA-3-3Ab) (Cyanobacteria bacterium Yellowstone A-Prime).